Consider the following 315-residue polypeptide: ATP synthase gamma chain (315 aa).

The protein belongs to the ATPase gamma chain family. As to quaternary structure, F-type ATPases have 2 components, CF(1) - the catalytic core - and CF(0) - the membrane proton channel. CF(1) has five subunits: alpha(3), beta(3), gamma(1), delta(1), epsilon(1). CF(0) has three main subunits: a, b and c.

It localises to the cellular thylakoid membrane. In terms of biological role, produces ATP from ADP in the presence of a proton gradient across the membrane. The gamma chain is believed to be important in regulating ATPase activity and the flow of protons through the CF(0) complex. The chain is ATP synthase gamma chain from Synechococcus sp. (strain PCC 6716).